The chain runs to 45 residues: Large ribosomal subunit protein bL34c (45 aa).

Over residues 1 to 10 the composition is skewed to polar residues; the sequence is MSKGFSNGTN. Residues 1–45 form a disordered region; that stretch reads MSKGFSNGTNIKRVRKSGFRARMSNSSGRKILNSRRRKQRKKIAL. The segment covering 32 to 45 has biased composition (basic residues); it reads LNSRRRKQRKKIAL.

The protein belongs to the bacterial ribosomal protein bL34 family.

The protein localises to the plastid. It is found in the chloroplast. The protein is Large ribosomal subunit protein bL34c of Gracilaria tenuistipitata var. liui (Red alga).